A 536-amino-acid chain; its full sequence is Pre-mRNA-splicing factor SLU7-B (536 aa).

Positions 1–42 (MATASVAFKSREDHRKKLELEEARKAGLAPAEVDEDGKEINP) are disordered. The span at 9-25 (KSREDHRKKLELEEARK) shows a compositional bias: basic and acidic residues. The CCHC-type zinc-finger motif lies at 96 to 109 (CINCGAMTHSSKAC). Disordered stretches follow at residues 176–201 (LKKL…DLDD) and 488–507 (KEDL…YNVN). Acidic residues predominate over residues 187–200 (NGDDATSDGEEDLD). The residue at position 193 (serine 193) is a Phosphoserine. Residues 486–493 (LKKEDLSR) carry the Nuclear localization signal motif. Positions 488–501 (KEDLSRREEKDERK) are enriched in basic and acidic residues.

The protein belongs to the SLU7 family. As to quaternary structure, interacts with PHYB in photobodies under red light.

It localises to the nucleus. In terms of biological role, participates in the second catalytic step of pre-mRNA splicing, when the free hydroxyl group of exon I attacks the 3'-splice site to generate spliced mRNA and the excised lariat intron. Splicing factor acting as a negative regulator of seedling photomorphogenesis by antagonizing PHYB signaling to promote light-induced hypocotyl elongation. Prevents the accumulation of functionally spliced RVE8a form, a circadian clock regulator mediating the transcriptional activation of clock genes containing evening elements (EE), but promotes PIF4 expression to fine-tune hypocotyl elongation in the light. Together with SMP1, involved in the timing of cell cycle arrest during leaf development, in a STRUWWELPETER (SWP) dependent manner; promotes cell proliferation in developing organs. In Arabidopsis thaliana (Mouse-ear cress), this protein is Pre-mRNA-splicing factor SLU7-B.